Here is a 326-residue protein sequence, read N- to C-terminus: Mitochondrial glycine transporter (326 aa).

Solcar repeat units follow at residues 22 to 106, 135 to 216, and 228 to 312; these read SKTT…LRTS, SANL…LKRY, and SSSS…LILR. The next 6 membrane-spanning stretches (helical) occupy residues 28–53, 81–107, 138–163, 191–214, 232–258, and 287–305; these read FGAG…TRVQ, GTLP…RTSL, LATG…VRYE, GFGA…EQLK, INFV…KTRL, and GLGL…AWTV.

It belongs to the mitochondrial carrier (TC 2.A.29) family. SLC25A38 subfamily.

The protein localises to the mitochondrion inner membrane. It catalyses the reaction glycine(in) = glycine(out). Functionally, mitochondrial glycine transporter that imports glycine into the mitochondrial matrix. Plays an important role in providing glycine for the first enzymatic step in heme biosynthesis, the condensation of glycine with succinyl-CoA to produce 5-aminolevulinate (ALA) in the mitochondrial matrix. The polypeptide is Mitochondrial glycine transporter (Emericella nidulans (strain FGSC A4 / ATCC 38163 / CBS 112.46 / NRRL 194 / M139) (Aspergillus nidulans)).